We begin with the raw amino-acid sequence, 128 residues long: Small ribosomal subunit protein uS12 (128 aa).

Aspartate 89 is subject to 3-methylthioaspartic acid. Residues 101 to 128 (SLDTSGVADRRNGRSKYGAKRPKEGAKK) are disordered.

It belongs to the universal ribosomal protein uS12 family. Part of the 30S ribosomal subunit. Contacts proteins S8 and S17. May interact with IF1 in the 30S initiation complex.

Functionally, with S4 and S5 plays an important role in translational accuracy. Its function is as follows. Interacts with and stabilizes bases of the 16S rRNA that are involved in tRNA selection in the A site and with the mRNA backbone. Located at the interface of the 30S and 50S subunits, it traverses the body of the 30S subunit contacting proteins on the other side and probably holding the rRNA structure together. The combined cluster of proteins S8, S12 and S17 appears to hold together the shoulder and platform of the 30S subunit. The protein is Small ribosomal subunit protein uS12 of Chloroherpeton thalassium (strain ATCC 35110 / GB-78).